Reading from the N-terminus, the 385-residue chain is Pectate lyase E (385 aa).

The N-terminal stretch at 1–30 is a signal peptide; that stretch reads MKNTRVRSIGTKSLLAAVVTAALMATSAYA. Asp-164 serves as a coordination point for Ca(2+). Residues 177-182 form repeat 1; that stretch reads DHVTIS. The 2 X 6 AA approximate repeats stretch occupies residues 177–218; that stretch reads DHVTISDGSFTDDKYTTKDGEKYVQHDGALDIKKGSDYVTIS. A Ca(2+)-binding site is contributed by Asp-207. Repeat unit 2 spans residues 213–218; it reads DYVTIS. Residue Arg-260 is part of the active site.

This sequence belongs to the polysaccharide lyase 1 family. PLBC subfamily. Requires Ca(2+) as cofactor.

It localises to the secreted. The enzyme catalyses Eliminative cleavage of (1-&gt;4)-alpha-D-galacturonan to give oligosaccharides with 4-deoxy-alpha-D-galact-4-enuronosyl groups at their non-reducing ends.. The protein operates within glycan metabolism; pectin degradation; 2-dehydro-3-deoxy-D-gluconate from pectin: step 2/5. In terms of biological role, involved in maceration and soft-rotting of plant tissue. The chain is Pectate lyase E (pelE) from Dickeya chrysanthemi (Pectobacterium chrysanthemi).